The chain runs to 144 residues: MRLNTLSPAEGSKHASKRLGRGIGSGLGKTGGRGHKGQKSRSGGGVRRGFEGGQMPLYRRLPKFGFTSRKAMVTAEIRLSEIALIEGDVIDLNVLKAANVIGPQIEFAKVMLSGEINRAVTLRGLRVSKGARAAIEAAGGKIEE.

The disordered stretch occupies residues 1–53 (MRLNTLSPAEGSKHASKRLGRGIGSGLGKTGGRGHKGQKSRSGGGVRRGFEGG). Positions 21-31 (RGIGSGLGKTG) are enriched in gly residues.

It belongs to the universal ribosomal protein uL15 family. Part of the 50S ribosomal subunit.

Binds to the 23S rRNA. The chain is Large ribosomal subunit protein uL15 from Edwardsiella ictaluri (strain 93-146).